Reading from the N-terminus, the 164-residue chain is Protein-export protein SecB (164 aa).

The protein belongs to the SecB family. In terms of assembly, homotetramer, a dimer of dimers. One homotetramer interacts with 1 SecA dimer.

It is found in the cytoplasm. One of the proteins required for the normal export of preproteins out of the cell cytoplasm. It is a molecular chaperone that binds to a subset of precursor proteins, maintaining them in a translocation-competent state. It also specifically binds to its receptor SecA. The polypeptide is Protein-export protein SecB (Zymomonas mobilis subsp. mobilis (strain ATCC 31821 / ZM4 / CP4)).